We begin with the raw amino-acid sequence, 75 residues long: Large ribosomal subunit protein eL14 (75 aa).

The protein belongs to the eukaryotic ribosomal protein eL14 family.

The protein is Large ribosomal subunit protein eL14 of Methanothermobacter thermautotrophicus (strain ATCC 29096 / DSM 1053 / JCM 10044 / NBRC 100330 / Delta H) (Methanobacterium thermoautotrophicum).